The primary structure comprises 231 residues: 7-cyano-7-deazaguanine synthase (231 aa).

8-18 (FSGGQDSTTCL) lines the ATP pocket. Zn(2+) contacts are provided by C188, C197, C200, and C203.

The protein belongs to the QueC family. Zn(2+) is required as a cofactor.

The enzyme catalyses 7-carboxy-7-deazaguanine + NH4(+) + ATP = 7-cyano-7-deazaguanine + ADP + phosphate + H2O + H(+). It functions in the pathway purine metabolism; 7-cyano-7-deazaguanine biosynthesis. Functionally, catalyzes the ATP-dependent conversion of 7-carboxy-7-deazaguanine (CDG) to 7-cyano-7-deazaguanine (preQ(0)). In Escherichia coli (strain SE11), this protein is 7-cyano-7-deazaguanine synthase.